The primary structure comprises 114 residues: Fumarate reductase subunit D (114 aa).

A run of 3 helical transmembrane segments spans residues 27-47 (ICFP…LIPM), 50-70 (IIVF…TIFP), and 94-114 (WLFY…VIAL).

This sequence belongs to the FrdD family. In terms of assembly, part of an enzyme complex containing four subunits: a flavoprotein (FrdA), an iron-sulfur protein (FrdB), and two hydrophobic anchor proteins (FrdC and FrdD).

The protein resides in the cell inner membrane. In terms of biological role, anchors the catalytic components of the fumarate reductase complex to the cell membrane, binds quinones. The sequence is that of Fumarate reductase subunit D from Haemophilus ducreyi (strain 35000HP / ATCC 700724).